The primary structure comprises 389 residues: Type II methyltransferase M1.ScrFI (389 aa).

An HTH cro/C1-type domain is found at 16–71; it reads IKEKRLRLNMTQKELADAVGMSKNGDRTIRRWENGETCPSQLEISAILRFPEIAPF. Residues 79–387 form the SAM-dependent MTase C5-type domain; the sequence is YKMIDLFAGI…EKMLEVLEKS (309 aa). C149 is a catalytic residue.

This sequence belongs to the class I-like SAM-binding methyltransferase superfamily. C5-methyltransferase family.

The enzyme catalyses a 2'-deoxycytidine in DNA + S-adenosyl-L-methionine = a 5-methyl-2'-deoxycytidine in DNA + S-adenosyl-L-homocysteine + H(+). Its function is as follows. A methylase, recognizes the double-stranded sequence 5'-CCNGG-3', methylates C-2 on both strands, and protects the DNA from cleavage by the ScrFI endonuclease. The polypeptide is Type II methyltransferase M1.ScrFI (scrFIAM) (Lactococcus lactis subsp. cremoris (Streptococcus cremoris)).